The primary structure comprises 331 residues: Phosphoribosylformylglycinamidine cyclo-ligase (331 aa).

It belongs to the AIR synthase family.

The protein resides in the cytoplasm. It catalyses the reaction 2-formamido-N(1)-(5-O-phospho-beta-D-ribosyl)acetamidine + ATP = 5-amino-1-(5-phospho-beta-D-ribosyl)imidazole + ADP + phosphate + H(+). The protein operates within purine metabolism; IMP biosynthesis via de novo pathway; 5-amino-1-(5-phospho-D-ribosyl)imidazole from N(2)-formyl-N(1)-(5-phospho-D-ribosyl)glycinamide: step 2/2. This Clostridium kluyveri (strain NBRC 12016) protein is Phosphoribosylformylglycinamidine cyclo-ligase.